The primary structure comprises 171 residues: MATATNGNASAAAAAADSAVQEPPHKIAKVAPLLKVKKLSENAVLPSRGSALAAGYDLSSAAEVVVPARGKAMVPTDLSIAIPEGTYARVAPRSGLALKHSIDVGAGVIDADYRGPVGVILFNHSDTDFAVKPGDRIAQMIIEVIVTPEVAEVEDLDATVRGEGGFGSTGV.

Glu143 serves as a coordination point for Mg(2+).

The protein belongs to the dUTPase family. In terms of assembly, homotrimer. Mg(2+) serves as cofactor.

It catalyses the reaction dUTP + H2O = dUMP + diphosphate + H(+). It participates in pyrimidine metabolism; dUMP biosynthesis; dUMP from dCTP (dUTP route): step 2/2. Its function is as follows. This enzyme is involved in nucleotide metabolism: it produces dUMP, the immediate precursor of thymidine nucleotides and it decreases the intracellular concentration of dUTP, preventing uracil incorporation into DNA. The chain is Deoxyuridine 5'-triphosphate nucleotidohydrolase (DUT) from Oryza sativa subsp. japonica (Rice).